Consider the following 508-residue polypeptide: ATP synthase subunit alpha, chloroplastic (508 aa).

Position 172–179 (172–179) interacts with ATP; the sequence is GDRQTGKT.

It belongs to the ATPase alpha/beta chains family. F-type ATPases have 2 components, CF(1) - the catalytic core - and CF(0) - the membrane proton channel. CF(1) has five subunits: alpha(3), beta(3), gamma(1), delta(1), epsilon(1). CF(0) has four main subunits: a, b, b' and c.

The protein resides in the plastid. It localises to the chloroplast thylakoid membrane. It carries out the reaction ATP + H2O + 4 H(+)(in) = ADP + phosphate + 5 H(+)(out). Its function is as follows. Produces ATP from ADP in the presence of a proton gradient across the membrane. The alpha chain is a regulatory subunit. The chain is ATP synthase subunit alpha, chloroplastic from Psilotum nudum (Whisk fern).